Consider the following 388-residue polypeptide: 4-hydroxy-3-methylbut-2-en-1-yl diphosphate synthase (flavodoxin) (388 aa).

Residues C280, C283, C315, and E322 each contribute to the [4Fe-4S] cluster site. The interval 369–388 (MNSEGGPEATSSGSPVVTVS) is disordered. Positions 377 to 388 (ATSSGSPVVTVS) are enriched in polar residues.

This sequence belongs to the IspG family. [4Fe-4S] cluster is required as a cofactor.

The enzyme catalyses (2E)-4-hydroxy-3-methylbut-2-enyl diphosphate + oxidized [flavodoxin] + H2O + 2 H(+) = 2-C-methyl-D-erythritol 2,4-cyclic diphosphate + reduced [flavodoxin]. It functions in the pathway isoprenoid biosynthesis; isopentenyl diphosphate biosynthesis via DXP pathway; isopentenyl diphosphate from 1-deoxy-D-xylulose 5-phosphate: step 5/6. In terms of biological role, converts 2C-methyl-D-erythritol 2,4-cyclodiphosphate (ME-2,4cPP) into 1-hydroxy-2-methyl-2-(E)-butenyl 4-diphosphate. The sequence is that of 4-hydroxy-3-methylbut-2-en-1-yl diphosphate synthase (flavodoxin) from Mycolicibacterium paratuberculosis (strain ATCC BAA-968 / K-10) (Mycobacterium paratuberculosis).